Consider the following 331-residue polypeptide: CRISPR-associated endonuclease Cas1 (331 aa).

The Mn(2+) site is built by E166, H228, and D243.

This sequence belongs to the CRISPR-associated endonuclease Cas1 family. As to quaternary structure, homodimer, forms a heterotetramer with a Cas2 homodimer. Requires Mg(2+) as cofactor. Mn(2+) is required as a cofactor.

Its function is as follows. CRISPR (clustered regularly interspaced short palindromic repeat), is an adaptive immune system that provides protection against mobile genetic elements (viruses, transposable elements and conjugative plasmids). CRISPR clusters contain spacers, sequences complementary to antecedent mobile elements, and target invading nucleic acids. CRISPR clusters are transcribed and processed into CRISPR RNA (crRNA). Acts as a dsDNA endonuclease. Involved in the integration of spacer DNA into the CRISPR cassette. The sequence is that of CRISPR-associated endonuclease Cas1 from Hyperthermus butylicus (strain DSM 5456 / JCM 9403 / PLM1-5).